The sequence spans 1014 residues: MFKAVNPRQNFPQMEEEILKIWQDKGIFKKSIENRRDGKRFTLYEGPPTANGRPGIHHVLSRVFKDVIPRYKVMKGYYAPRIGGWDTHGLPVELEVEKELGFTSKNDIEKYGIAEFNTRCRSSVFKYVSEWNKLTERIAYWVDLDNAYITMDNKYIESGWWALKQMWDKGLVYQGHRVTPHCPRCGTSLSSHEVAQGYKDNTEDPSVFVKFEINHESLAQTGLGQKWVNPSDKPLYLLAWTTTPWTLPANTALAVSATDEYAILDMADYYMVLAKPRLSSLKLTENPIVGECLGSDLKGLTYKPLFDPREFGISVKNMQDNSEIDALEPLSYPVITTSYVSMDDGTGIVHTAPAYGELDYESGVKYGLKFVHHVDLQGRITGNYPFAGKFVKEADKDISRNLKERGLMFRNERMHHTYPFCWRCDSPLIYYAKQSWYIRTTAVRDELIKGNQQINWYPEHIKDGRFGDWLENNIDWAFSRERYWGTPVPIWRCEKCGQTECVGGIDELKAKPNFKGMQEKLDIHRPYADEWTYDCAKCGGNMKRVTEVMDCWYDSGAMPVAQYHYPFEPESRTIASDGRFPADYICEAVDQTRGWFYSLHAISTLIFGRPCYQNVICLGHILDERGEKMSKSKNNVIQPAAVLDKYGADAVRWYFYTAAPPGNARRFSEKLVGEVTRQFLLMLWNIYSFFVTYANIDNFTPSEKYLAGEVPELDRWILSELNQLVLDVDKGLDNYDPTQAGRRIEDFVGYLSNWYVRRSRRRFWKSENDADKLSAYQALYTCLVTLSKLLAPFTPFVAEELYQNLVLLVDQSALESVHLTDFPVADKALIDEQLDNEIRLVMKVSSMGRSARSKAALKVRQPLAEVRVVLSSPAERTGLMRLAEQVLEELNVKALVAEEPGTAIPQENYVASTEGAYTVAVYTGLSPELLAEGSAREIVHRLQTMRKSAEFEIADYINTHYQADEYLESVIRTHAEYIKKETLSNQIVNGNAPEGAYTESLDIDGHPLSLWVVR.

Positions 48–58 match the 'HIGH' region motif; the sequence is PTANGRPGIHH. A 'KMSKS' region motif is present at residues 628–632; that stretch reads KMSKS. ATP is bound at residue lysine 631.

This sequence belongs to the class-I aminoacyl-tRNA synthetase family. IleS type 2 subfamily. In terms of assembly, monomer. Zn(2+) is required as a cofactor.

Its subcellular location is the cytoplasm. It carries out the reaction tRNA(Ile) + L-isoleucine + ATP = L-isoleucyl-tRNA(Ile) + AMP + diphosphate. In terms of biological role, catalyzes the attachment of isoleucine to tRNA(Ile). As IleRS can inadvertently accommodate and process structurally similar amino acids such as valine, to avoid such errors it has two additional distinct tRNA(Ile)-dependent editing activities. One activity is designated as 'pretransfer' editing and involves the hydrolysis of activated Val-AMP. The other activity is designated 'posttransfer' editing and involves deacylation of mischarged Val-tRNA(Ile). The sequence is that of Isoleucine--tRNA ligase from Dehalococcoides mccartyi (strain CBDB1).